The following is a 130-amino-acid chain: Small ribosomal subunit protein uS11 (130 aa).

It belongs to the universal ribosomal protein uS11 family. In terms of assembly, part of the 30S ribosomal subunit. Interacts with proteins S7 and S18. Binds to IF-3.

Its function is as follows. Located on the platform of the 30S subunit, it bridges several disparate RNA helices of the 16S rRNA. Forms part of the Shine-Dalgarno cleft in the 70S ribosome. The polypeptide is Small ribosomal subunit protein uS11 (Moorella thermoacetica (strain ATCC 39073 / JCM 9320)).